We begin with the raw amino-acid sequence, 388 residues long: Succinate--CoA ligase [ADP-forming] subunit beta (388 aa).

The 236-residue stretch at Lys-9–Gln-244 folds into the ATP-grasp domain. Residues Lys-46, Gly-53–Gly-55, Glu-99, Thr-102, and Glu-107 each bind ATP. Mg(2+) is bound by residues Asn-199 and Asp-213. Residues Asn-264 and Gly-321–Val-323 contribute to the substrate site.

This sequence belongs to the succinate/malate CoA ligase beta subunit family. Heterotetramer of two alpha and two beta subunits. The cofactor is Mg(2+).

It carries out the reaction succinate + ATP + CoA = succinyl-CoA + ADP + phosphate. The catalysed reaction is GTP + succinate + CoA = succinyl-CoA + GDP + phosphate. It participates in carbohydrate metabolism; tricarboxylic acid cycle; succinate from succinyl-CoA (ligase route): step 1/1. Functionally, succinyl-CoA synthetase functions in the citric acid cycle (TCA), coupling the hydrolysis of succinyl-CoA to the synthesis of either ATP or GTP and thus represents the only step of substrate-level phosphorylation in the TCA. The beta subunit provides nucleotide specificity of the enzyme and binds the substrate succinate, while the binding sites for coenzyme A and phosphate are found in the alpha subunit. The protein is Succinate--CoA ligase [ADP-forming] subunit beta of Escherichia coli O8 (strain IAI1).